Here is a 106-residue protein sequence, read N- to C-terminus: MAEVTGFESELKTLLRTGKVVFGSKKTIKMVKTGKVKMVIIASTLRQDLKDDILAYAKISNIPVYQYNGSAYELGTLCGKPFMISTIGVIDPGESRLLEEIKEGAQ.

This sequence belongs to the eukaryotic ribosomal protein eL30 family.

This is Large ribosomal subunit protein eL30 (rpl30e) from Sulfurisphaera tokodaii (strain DSM 16993 / JCM 10545 / NBRC 100140 / 7) (Sulfolobus tokodaii).